Consider the following 514-residue polypeptide: Glutamate--cysteine ligase (514 aa).

It belongs to the glutamate--cysteine ligase type 1 family. Type 1 subfamily.

The catalysed reaction is L-cysteine + L-glutamate + ATP = gamma-L-glutamyl-L-cysteine + ADP + phosphate + H(+). The protein operates within sulfur metabolism; glutathione biosynthesis; glutathione from L-cysteine and L-glutamate: step 1/2. This is Glutamate--cysteine ligase from Enterobacter sp. (strain 638).